A 111-amino-acid chain; its full sequence is Disintegrin CV-11-alpha (111 aa).

The signal sequence occupies residues 1–20 (MIQVLLVIICLAVFPYQGSS). Residues 21-46 (IILESGNVNDFELVYPKKVTVLPTGA) constitute a propeptide that is removed on maturation. The region spanning 47 to 111 (MNSAHPCCDP…SDCPRNPWKD (65 aa)) is the Disintegrin domain. Cystine bridges form between Cys53–Cys76, Cys67–Cys73, Cys72–Cys97, and Cys85–Cys104. Positions 89-91 (KGD) match the Cell attachment site motif.

This sequence belongs to the disintegrin family. Dimeric disintegrin subfamily. As to quaternary structure, heterodimer with subunit beta; disulfide-linked. Expressed by the venom gland.

The protein localises to the secreted. In terms of biological role, inhibits ADP-induced human platelet aggregation. Antagonist of alpha-IIb/beta-3 (ITGA2B/ITGB3). The protein is Disintegrin CV-11-alpha of Cerastes vipera (Sahara sand viper).